A 406-amino-acid chain; its full sequence is Probable UDP-arabinose 4-epimerase 3 (406 aa).

Over 1-26 the chain is Cytoplasmic; sequence MIPLNRRASQTRGGMEYFDARRKPHN. A helical; Signal-anchor for type II membrane protein membrane pass occupies residues 27–44; the sequence is VGKVIAALVLTTLCIFIL. Residues 45-406 lie on the Lumenal side of the membrane; sequence KQSPGFGGSS…KSHPRGYGSN (362 aa). Residue 65–96 coordinates NAD(+); that stretch reads HVLVTGGAGYIGSHASLRLLKDNYRVTIVDNL. The active-site Proton acceptor is the Tyr213.

The protein belongs to the NAD(P)-dependent epimerase/dehydratase family. NAD(+) serves as cofactor.

It is found in the golgi apparatus. Its subcellular location is the golgi stack membrane. The enzyme catalyses UDP-beta-L-arabinopyranose = UDP-alpha-D-xylose. It functions in the pathway nucleotide-sugar biosynthesis; UDP-L-arabinose biosynthesis; UDP-L-arabinose from UDP-alpha-D-xylose: step 1/1. The protein operates within cell wall biogenesis; cell wall polysaccharide biosynthesis. In Oryza sativa subsp. japonica (Rice), this protein is Probable UDP-arabinose 4-epimerase 3 (UEL-3).